The following is a 317-amino-acid chain: Phospho-N-acetylmuramoyl-pentapeptide-transferase (317 aa).

The next 9 membrane-spanning stretches (helical) occupy residues 3–23 (VIIY…PLFI), 48–68 (GTPT…MIIM), 72–92 (LNSN…IGLI), 112–132 (FLLQ…RFGS), 141–161 (ITWT…FVAV), 171–191 (LDGL…VVSF), 193–213 (WHQY…LGFL), 238–258 (AIAL…IYVI), and 297–317 (VVSV…LSLI).

It belongs to the glycosyltransferase 4 family. MraY subfamily. It depends on Mg(2+) as a cofactor.

It is found in the cell membrane. It catalyses the reaction UDP-N-acetyl-alpha-D-muramoyl-L-alanyl-gamma-D-glutamyl-meso-2,6-diaminopimeloyl-D-alanyl-D-alanine + di-trans,octa-cis-undecaprenyl phosphate = di-trans,octa-cis-undecaprenyl diphospho-N-acetyl-alpha-D-muramoyl-L-alanyl-D-glutamyl-meso-2,6-diaminopimeloyl-D-alanyl-D-alanine + UMP. The protein operates within cell wall biogenesis; peptidoglycan biosynthesis. Its function is as follows. Catalyzes the initial step of the lipid cycle reactions in the biosynthesis of the cell wall peptidoglycan: transfers peptidoglycan precursor phospho-MurNAc-pentapeptide from UDP-MurNAc-pentapeptide onto the lipid carrier undecaprenyl phosphate, yielding undecaprenyl-pyrophosphoryl-MurNAc-pentapeptide, known as lipid I. The sequence is that of Phospho-N-acetylmuramoyl-pentapeptide-transferase from Clostridium acetobutylicum (strain ATCC 824 / DSM 792 / JCM 1419 / IAM 19013 / LMG 5710 / NBRC 13948 / NRRL B-527 / VKM B-1787 / 2291 / W).